A 460-amino-acid chain; its full sequence is Orexin receptor type 2 (460 aa).

The Extracellular portion of the chain corresponds to 1-54 (MSSTKLEDSLPRRNWSSASELNETQEPFLNPTDYDDEEFLRYLWREYLHPKEYE). Residues N14 and N22 are each glycosylated (N-linked (GlcNAc...) asparagine). Residues 33-49 (DYDDEEFLRYLWREYLH) form a required for response to orexin-A region. Residues 55 to 75 (WVLIAGYIIVFVVALIGNVLV) form a helical membrane-spanning segment. At 76 to 88 (CVAVWKNHHMRTV) the chain is on the cytoplasmic side. Residues 89-110 (TNYFIVNLSLADVLVTITCLPA) form a helical membrane-spanning segment. Residues 111-127 (TLVVDITETWFFGQSLC) lie on the Extracellular side of the membrane. Residues C127 and C210 are joined by a disulfide bond. The helical transmembrane segment at 128–150 (KVIPYLQTVSVSVSVLTLSCIAL) threads the bilayer. The Cytoplasmic segment spans residues 151–170 (DRWYAICHPLMFKSTAKRAR). The helical transmembrane segment at 171-191 (NSIVVIWIVSCIIMIPQAIVM) threads the bilayer. The Extracellular segment spans residues 192 to 222 (ERSSMLPGLANKTTLFTVCDERWGGEVYPKM). N-linked (GlcNAc...) asparagine glycosylation is present at N202. The chain crosses the membrane as a helical span at residues 223-243 (YHICFFLVTYMAPLCLMVLAY). At 244-304 (LQIFRKLWCR…QIRARRKTAR (61 aa)) the chain is on the cytoplasmic side. Residues 305–326 (MLMVVLLVFAICYLPISILNVL) form a helical membrane-spanning segment. Residues 327–342 (KRVFGMFTHTEDRETV) are Extracellular-facing. A helical transmembrane segment spans residues 343–366 (YAWFTFSHWLVYANSAANPIIYNF). The Cytoplasmic portion of the chain corresponds to 367–460 (LSGKFREEFK…SSLLSTWLEV (94 aa)).

Belongs to the G-protein coupled receptor 1 family. As to expression, expressed in the brain in the cerebral cortex, septal nuclei, hippocampus, medial thalamic groups, dorsal and median raphe nuclei, and many hypothalamic nuclei including the tuberomammillary nucleus, dorsomedial hypothalamus, paraventricular hypothalamic nucleus, and ventral premammillary nucleus. Not detected in the spleen, lung, liver, skeletal muscle, kidney and testis. Orexin receptor mRNA expression has also been reported in the adrenal gland, enteric nervous system, and pancreas.

It is found in the cell membrane. Functionally, nonselective, high-affinity receptor for both orexin-A and orexin-B neuropeptides. Triggers an increase in cytoplasmic Ca(2+) levels in response to orexin-A binding. The chain is Orexin receptor type 2 (Hcrtr2) from Rattus norvegicus (Rat).